The primary structure comprises 122 residues: Large ribosomal subunit protein bL12 (122 aa).

This sequence belongs to the bacterial ribosomal protein bL12 family. Homodimer. Part of the 50S ribosomal subunit; present in 4 copies per ribosome. Forms part of the ribosomal stalk which helps the ribosome interact with GTP-bound translation factors. Forms a pentameric L10(L12)2(L12)2 complex, where L10 forms an elongated spine to which 2 L12 dimers bind in a sequential fashion.

Its function is as follows. Forms part of the ribosomal stalk which helps the ribosome interact with GTP-bound translation factors. Is thus essential for accurate translation. This Geobacillus stearothermophilus (Bacillus stearothermophilus) protein is Large ribosomal subunit protein bL12.